A 295-amino-acid chain; its full sequence is MAPTQIFVSPEFYGVYILQSEPSPRSFYIGSTPDPIRRLRQHNGDLKQGAFRTRRTSRRPWKMIAITHNFPSRVAALQFEHALQHPKTSRHMAGGGGSVTATAETAKSAPVAGKSDATSPAKNRRNAAPVARSGRTHLRNVARLLESPYFSRMGLKVTIFDPSLFDMDLLPAQLQSFAAFSGARTAACSDYFSVAKKAALTTAHCCLCSDAIDYVPEMLPESIKDVLLVLPLIAVCPSCAVICHLRCLAASWYQSSEINAALIPSDVSCSQCGAQTSWRLVADMATKLRQYALSS.

Residues 11–93 form the GIY-YIG domain; that stretch reads EFYGVYILQS…QHPKTSRHMA (83 aa). Residues 85 to 133 form a disordered region; it reads HPKTSRHMAGGGGSVTATAETAKSAPVAGKSDATSPAKNRRNAAPVARS. Residues 205–272 form an SLX1-type zinc finger; it reads CCLCSDAIDY…IPSDVSCSQC (68 aa).

It belongs to the SLX1 family. As to quaternary structure, forms a heterodimer with SLX4. The cofactor is a divalent metal cation.

The protein resides in the nucleus. Its function is as follows. Catalytic subunit of the SLX1-SLX4 structure-specific endonuclease that resolves DNA secondary structures generated during DNA repair and recombination. Has endonuclease activity towards branched DNA substrates, introducing single-strand cuts in duplex DNA close to junctions with ss-DNA. This is Structure-specific endonuclease subunit SLX1 from Meyerozyma guilliermondii (strain ATCC 6260 / CBS 566 / DSM 6381 / JCM 1539 / NBRC 10279 / NRRL Y-324) (Yeast).